The sequence spans 448 residues: Antizyme inhibitor 1 (448 aa).

It belongs to the Orn/Lys/Arg decarboxylase class-II family. ODC antizyme inhibitor subfamily. As to quaternary structure, monomer. Interacts with OAZ1 and OAZ3; this interaction disrupts the interaction between the antizyme and ODC1. Post-translationally, ubiquitinated, leading to its proteasomal degradation; a process that is reduced in presence of antizyme OAZ1. Expressed during testis development.

The protein resides in the nucleus. Functionally, antizyme inhibitor (AZI) protein that positively regulates ornithine decarboxylase (ODC) activity and polyamine uptake. AZI is an enzymatically inactive ODC homolog that counteracts the negative effect of ODC antizymes (AZs) OAZ1, OAZ2 and OAZ3 on ODC activity by competing with ODC for antizyme-binding. Inhibits antizyme-dependent ODC degradation and releases ODC monomers from their inactive complex with antizymes, leading to formation of the catalytically active ODC homodimer and restoring polyamine production. The polypeptide is Antizyme inhibitor 1 (Azin1) (Mus musculus (Mouse)).